Consider the following 206-residue polypeptide: MPFIDENQLSVREMREEEAPVVLEMLKDGFKDTENRLILYILTRPMTLLLMAVASSGLRFILNSFSVALVIPVLLTIVGLKLLLWRSPDLKQIYSYYSIGQRKIWVAVYDQDDICGCVALEPTQDHQTVELKRMSVSRWYRRSGVGTHLLKFFEDHAKKKGFRGIVLYTSVVAKAAIGLFKNCGYKVTGGWNWLGYTIVQEFRKDI.

Residues 9–206 (LSVREMREEE…TIVQEFRKDI (198 aa)) enclose the N-acetyltransferase domain. The next 2 membrane-spanning stretches (helical) occupy residues 37-57 (LILY…ASSG) and 60-80 (FILN…IVGL).

The protein belongs to the camello family.

The protein localises to the membrane. Functionally, probable acetyltransferase. The polypeptide is Probable N-acetyltransferase 14 (nat14) (Xenopus tropicalis (Western clawed frog)).